A 1577-amino-acid chain; its full sequence is Vacuolar protein sorting/targeting protein PEP1 (1577 aa).

An N-terminal signal peptide occupies residues 1–21; it reads MILLHFVYSLWALLLIPLINA. Topologically, residues 22–1391 are lumenal; sequence EEFTPKVTKT…EFKEKYSVSA (1370 aa). 2 BNR repeats span residues 58–68 and 101–111; these read ISFDDGETWEK and YITNDQGKSWE. N-linked (GlcNAc...) asparagine glycosylation is found at N121 and N168. BNR repeat units follow at residues 179 to 187 and 414 to 423; these read SNDGGKSFS and ISVDNGLTWT. N-linked (GlcNAc...) asparagine glycosylation is present at N445. BNR repeat units follow at residues 485 to 495, 531 to 541, and 762 to 771; these read FISRDGGLTWK, YYSLDQGKTWT, and YISHDGGQTI. The N-linked (GlcNAc...) asparagine glycan is linked to N791. The BNR 8 repeat unit spans residues 859–869; it reads YLTNDGGETFT. N-linked (GlcNAc...) asparagine glycosylation is present at N1008. 2 BNR repeats span residues 1141-1150 and 1183-1192; these read FFTTDGGETW and YSTDFGKTWK. N-linked (GlcNAc...) asparagine glycosylation occurs at N1301. The helical transmembrane segment at 1392–1412 threads the bilayer; the sequence is GPFAFIFISILLIIFFAAWFV. Topologically, residues 1413 to 1577 are cytoplasmic; the sequence is YDRGIRRNGG…DSTAPSNENQ (165 aa). The tract at residues 1531-1577 is disordered; the sequence is DDVPTLEEEHTSYTDQPTTTDVPDALPEGNEENIDRPDSTAPSNENQ.

The protein belongs to the VPS10-related sortilin family.

The protein resides in the golgi apparatus. Its subcellular location is the trans-Golgi network membrane. It localises to the prevacuolar compartment membrane. Its function is as follows. Functions as a sorting receptor in the Golgi compartment required for the intracellular sorting and delivery of soluble vacuolar proteins, like carboxypeptidase Y (CPY) and proteinase A. Executes multiple rounds of sorting by cycling between the late Golgi and a prevacuolar endosome-like compartment. Binds the Golgi-modified P2 form of CPY, and this interaction is dependent on the presence of an intact CPY vacuolar protein sorting signal. This chain is Vacuolar protein sorting/targeting protein PEP1 (PEP1), found in Saccharomyces cerevisiae (strain Lalvin EC1118 / Prise de mousse) (Baker's yeast).